The primary structure comprises 380 residues: 3-dehydroquinate synthase (380 aa).

Residues 100-104 (GAASD), 124-125 (TT), lysine 137, and lysine 146 each bind NAD(+). Zn(2+) contacts are provided by glutamate 179, histidine 251, and histidine 267.

The protein belongs to the sugar phosphate cyclases superfamily. Dehydroquinate synthase family. The cofactor is NAD(+). Co(2+) is required as a cofactor. Zn(2+) serves as cofactor.

Its subcellular location is the cytoplasm. It carries out the reaction 7-phospho-2-dehydro-3-deoxy-D-arabino-heptonate = 3-dehydroquinate + phosphate. Its pathway is metabolic intermediate biosynthesis; chorismate biosynthesis; chorismate from D-erythrose 4-phosphate and phosphoenolpyruvate: step 2/7. In terms of biological role, catalyzes the conversion of 3-deoxy-D-arabino-heptulosonate 7-phosphate (DAHP) to dehydroquinate (DHQ). This is 3-dehydroquinate synthase from Tropheryma whipplei (strain TW08/27) (Whipple's bacillus).